The sequence spans 887 residues: 3-hydroxy-3-methylglutaryl-coenzyme A reductase (887 aa).

Topologically, residues 1–9 are cytoplasmic; the sequence is MLSRLFRMH. A helical membrane pass occupies residues 10 to 39; sequence GLFVASHPWEVIVGTVTLTICMMSMNMFTG. Over 40–56 the chain is Lumenal; sequence NNKICGWNYECPKFEED. The chain crosses the membrane as a helical span at residues 57 to 78; it reads VLSSDIIILTITRCIAILYIYF. An SSD domain is found at 61 to 218; the sequence is DIIILTITRC…MTFFPACVSL (158 aa). An INSIG-binding motif motif is present at residues 75–78; sequence YIYF. Residues 79–89 are Cytoplasmic-facing; it reads QFQNLRQLGSK. Residue Lys89 forms a Glycyl lysine isopeptide (Lys-Gly) (interchain with G-Cter in ubiquitin) linkage. The chain crosses the membrane as a helical span at residues 90 to 114; the sequence is YILGIAGLFTIFSSFVFSTVVIHFL. The Lumenal segment spans residues 115-123; the sequence is DKELTGLNE. The chain crosses the membrane as a helical span at residues 124–149; sequence ALPFFLLLIDLSRASALAKFALSSNS. Residues 150–159 are Cytoplasmic-facing; the sequence is QDEVRENIAR. A helical transmembrane segment spans residues 160–187; that stretch reads GMAILGPTFTLDALVECLVIGVGTMSGV. The Lumenal portion of the chain corresponds to 188–191; that stretch reads RQLE. The chain crosses the membrane as a helical span at residues 192–220; that stretch reads IMCCFGCMSVLANYFVFMTFFPACVSLVL. Over 221-248 the chain is Cytoplasmic; sequence ELSRESREGRPIWQLSHFARVLEEEENK. Lys248 participates in a covalent cross-link: Glycyl lysine isopeptide (Lys-Gly) (interchain with G-Cter in ubiquitin). The helical transmembrane segment at 249-275 threads the bilayer; sequence PNPVTQRVKMIMSLGLVLVHAHSRWIA. The Lumenal portion of the chain corresponds to 276–314; sequence DPSPQNSTAEQSKVSLGLAEDVSKRIEPSVSLWQFYLSK. The N-linked (GlcNAc...) asparagine glycan is linked to Asn281. A helical transmembrane segment spans residues 315-339; it reads MISMDIEQVITLSLALLLAVKYIFF. The Cytoplasmic portion of the chain corresponds to 340–887; sequence EQAETESTLS…LQGTCTKKAA (548 aa). Residues Glu558, Lys690, and Asp766 each act as charge relay system in the active site. His865 (proton donor) is an active-site residue. Ser871 is modified (phosphoserine; by AMPK).

This sequence belongs to the HMG-CoA reductase family. In terms of assembly, homotetramer. Homodimer. Interacts (via its SSD) with INSIG1; the interaction, accelerated by sterols, leads to the recruitment of HMGCR to AMFR/gp78 for its ubiquitination by the sterol-mediated ERAD pathway. Interacts with UBIAD1. In terms of processing, undergoes sterol-mediated ubiquitination and ER-associated degradation (ERAD). Accumulation of sterols in the endoplasmic reticulum (ER) membrane, triggers binding of the reductase to the ER membrane protein INSIG1 or INSIG2. The INSIG1 binding leads to the recruitment of the ubiquitin ligase, AMFR/gp78, RNF139 or RNF145, initiating ubiquitination of the reductase. The ubiquitinated reductase is then extracted from the ER membrane and delivered to cytosolic 26S proteosomes by a mechanism probably mediated by the ATPase Valosin-containing protein VCP/p97. The INSIG2-binding leads to the recruitment of the ubiquitin ligase RNF139, initiating ubiquitination of the reductase. Lys-248 is the main site of ubiquitination. Ubiquitination is enhanced by the presence of a geranylgeranylated protein. N-glycosylated. Deglycosylated by NGLY1 on release from the endoplasmic reticulum (ER) in a sterol-mediated manner. Post-translationally, phosphorylated. Phosphorylation at Ser-871 reduces the catalytic activity.

The protein localises to the endoplasmic reticulum membrane. It localises to the peroxisome membrane. The catalysed reaction is (R)-mevalonate + 2 NADP(+) + CoA = (3S)-3-hydroxy-3-methylglutaryl-CoA + 2 NADPH + 2 H(+). The protein operates within metabolic intermediate biosynthesis; (R)-mevalonate biosynthesis; (R)-mevalonate from acetyl-CoA: step 3/3. Regulated by a negative feedback mechanism through sterols and non-sterol metabolites derived from mevalonate. Phosphorylation at Ser-871 down-regulates the catalytic activity. Catalyzes the conversion of (3S)-hydroxy-3-methylglutaryl-CoA (HMG-CoA) to mevalonic acid, the rate-limiting step in the synthesis of cholesterol and other isoprenoids, thus plays a critical role in cellular cholesterol homeostasis. In Rattus norvegicus (Rat), this protein is 3-hydroxy-3-methylglutaryl-coenzyme A reductase (Hmgcr).